The following is a 487-amino-acid chain: Malonate-semialdehyde dehydrogenase 2 (487 aa).

NAD(+) contacts are provided by Phe154, Lys178, Glu181, Arg182, and Ser231. Cys286 functions as the Nucleophile in the catalytic mechanism. Residue Glu386 coordinates NAD(+).

Belongs to the aldehyde dehydrogenase family. IolA subfamily. As to quaternary structure, homotetramer.

The enzyme catalyses 3-oxopropanoate + NAD(+) + CoA + H2O = hydrogencarbonate + acetyl-CoA + NADH + H(+). It carries out the reaction 2-methyl-3-oxopropanoate + NAD(+) + CoA + H2O = propanoyl-CoA + hydrogencarbonate + NADH + H(+). The protein operates within polyol metabolism; myo-inositol degradation into acetyl-CoA; acetyl-CoA from myo-inositol: step 7/7. In terms of biological role, catalyzes the oxidation of malonate semialdehyde (MSA) and methylmalonate semialdehyde (MMSA) into acetyl-CoA and propanoyl-CoA, respectively. Is involved in a myo-inositol catabolic pathway. Bicarbonate, and not CO2, is the end-product of the enzymatic reaction. This chain is Malonate-semialdehyde dehydrogenase 2, found in Bacillus thuringiensis subsp. konkukian (strain 97-27).